We begin with the raw amino-acid sequence, 207 residues long: Large ribosomal subunit protein uL4 (207 aa).

Belongs to the universal ribosomal protein uL4 family. In terms of assembly, part of the 50S ribosomal subunit.

In terms of biological role, one of the primary rRNA binding proteins, this protein initially binds near the 5'-end of the 23S rRNA. It is important during the early stages of 50S assembly. It makes multiple contacts with different domains of the 23S rRNA in the assembled 50S subunit and ribosome. Functionally, forms part of the polypeptide exit tunnel. This is Large ribosomal subunit protein uL4 from Pelagibacter ubique (strain HTCC1062).